A 477-amino-acid chain; its full sequence is Glycogen synthase (477 aa).

ADP-alpha-D-glucose is bound at residue lysine 15.

Belongs to the glycosyltransferase 1 family. Bacterial/plant glycogen synthase subfamily.

It catalyses the reaction [(1-&gt;4)-alpha-D-glucosyl](n) + ADP-alpha-D-glucose = [(1-&gt;4)-alpha-D-glucosyl](n+1) + ADP + H(+). Its pathway is glycan biosynthesis; glycogen biosynthesis. Synthesizes alpha-1,4-glucan chains using ADP-glucose. The sequence is that of Glycogen synthase from Citrobacter koseri (strain ATCC BAA-895 / CDC 4225-83 / SGSC4696).